A 432-amino-acid polypeptide reads, in one-letter code: Methylenetetrahydrofolate--tRNA-(uracil-5-)-methyltransferase TrmFO (432 aa).

7–12 (GAGLAG) contacts FAD.

The protein belongs to the MnmG family. TrmFO subfamily. The cofactor is FAD.

Its subcellular location is the cytoplasm. The catalysed reaction is uridine(54) in tRNA + (6R)-5,10-methylene-5,6,7,8-tetrahydrofolate + NADH + H(+) = 5-methyluridine(54) in tRNA + (6S)-5,6,7,8-tetrahydrofolate + NAD(+). It carries out the reaction uridine(54) in tRNA + (6R)-5,10-methylene-5,6,7,8-tetrahydrofolate + NADPH + H(+) = 5-methyluridine(54) in tRNA + (6S)-5,6,7,8-tetrahydrofolate + NADP(+). Catalyzes the folate-dependent formation of 5-methyl-uridine at position 54 (M-5-U54) in all tRNAs. The protein is Methylenetetrahydrofolate--tRNA-(uracil-5-)-methyltransferase TrmFO of Anoxybacillus flavithermus (strain DSM 21510 / WK1).